The chain runs to 87 residues: Beta-defensin 109 (87 aa).

A signal peptide spans 1 to 22 (MRLHLLLLILLLFSILLSPVRG). Cystine bridges form between Cys-31–Cys-59, Cys-38–Cys-53, and Cys-43–Cys-60.

This sequence belongs to the beta-defensin family.

It is found in the secreted. Has antibacterial activity. The protein is Beta-defensin 109 (DEFB109) of Pan troglodytes (Chimpanzee).